An 856-amino-acid polypeptide reads, in one-letter code: Lon protease homolog 2, peroxisomal (856 aa).

The region spanning leucine 13–isoleucine 222 is the Lon N-terminal domain. Residue glycine 379–threonine 386 coordinates ATP. Over residues glycine 586–valine 608 the composition is skewed to basic and acidic residues. The segment at glycine 586–serine 614 is disordered. The Lon proteolytic domain occupies leucine 655–glycine 841. Residues serine 747 and lysine 790 contribute to the active site. The Microbody targeting signal signature appears at serine 854 to leucine 856.

Belongs to the peptidase S16 family.

It localises to the peroxisome matrix. The enzyme catalyses Hydrolysis of proteins in presence of ATP.. Its function is as follows. ATP-dependent serine protease that mediates the selective degradation of misfolded and unassembled polypeptides in the peroxisomal matrix. Necessary for type 2 peroxisome targeting signal (PTS2)-containing protein processing and facilitates peroxisome matrix protein import. The polypeptide is Lon protease homolog 2, peroxisomal (lonp2) (Xenopus laevis (African clawed frog)).